An 86-amino-acid chain; its full sequence is MASSKAAINLQDIFLNQVRKEHVPVTVYLINGFQLKGTVKGFDNFTVVLESESKQQLLIYKHAISTISPQKPVIFSGSEKDDKKEE.

Residues 12 to 73 (DIFLNQVRKE…ISTISPQKPV (62 aa)) enclose the Sm domain.

The protein belongs to the Hfq family. As to quaternary structure, homohexamer.

Its function is as follows. RNA chaperone that binds small regulatory RNA (sRNAs) and mRNAs to facilitate mRNA translational regulation in response to envelope stress, environmental stress and changes in metabolite concentrations. Also binds with high specificity to tRNAs. The sequence is that of RNA-binding protein Hfq from Caldanaerobacter subterraneus subsp. tengcongensis (strain DSM 15242 / JCM 11007 / NBRC 100824 / MB4) (Thermoanaerobacter tengcongensis).